A 213-amino-acid polypeptide reads, in one-letter code: Cysteine dioxygenase (213 aa).

3 residues coordinate Fe cation: H100, H102, and H160. The 3'-(S-cysteinyl)-tyrosine (Cys-Tyr) cross-link spans 107-177; sequence CVMKVLKGSL…TNFAISLHLY (71 aa).

Belongs to the cysteine dioxygenase family. It depends on Fe cation as a cofactor. The thioether cross-link between Cys-107 and Tyr-177 plays a structural role through stabilizing the Fe(2+) ion, and prevents the production of highly damaging free hydroxyl radicals by holding the oxygen radical via hydroxyl hydrogen.

It carries out the reaction L-cysteine + O2 = 3-sulfino-L-alanine + H(+). In Ajellomyces capsulatus (strain G186AR / H82 / ATCC MYA-2454 / RMSCC 2432) (Darling's disease fungus), this protein is Cysteine dioxygenase (CDO1).